The sequence spans 181 residues: Salmonella anti-inflammatory response activator (181 aa).

Residues phenylalanine 4–asparagine 24 traverse the membrane as a helical segment.

In terms of assembly, interacts with host (human) STAT3.

The protein localises to the membrane. The protein resides in the host cytoplasm. A Salmonella strain-specific effector that induces a host STAT3-dependent anti-inflammatory pathway. In bacteria-infected host cells (human) leads to phosphorylation of host STAT3, at least on 'Tyr-705' and interleukin-10 (IL-10, IL10) production; expressing the gene alone in host cells induces STAT3 phosphorylation and IL-10 production. IL-10 production requires STAT3 in infected cells. Contributes to virulence in mouse infection models. Encoded in only a few S.typhimurium serovars, it may be a specific effector for adaptation to bovine hosts. This Salmonella typhimurium (strain 14028s / SGSC 2262) protein is Salmonella anti-inflammatory response activator.